A 122-amino-acid chain; its full sequence is uncharacterized protein (122 aa).

The protein to B.subtilis YpdA.

This is an uncharacterized protein from Bacillus licheniformis.